A 626-amino-acid chain; its full sequence is Endogenous retrovirus group S71 member 1 Env polyprotein (626 aa).

The signal sequence occupies residues 1–38 (MGPEAWVRPLKTAPKPGEAIRLILFIYLSCFFLPVMSS). Positions 39-438 (EPSYSFLLTS…PPELHPRLHQ (400 aa)) are surface protein. The Extracellular portion of the chain corresponds to 39–575 (EPSYSFLLTS…FNWNPWLTTL (537 aa)). Residues 302 to 305 (CWLC) carry the CXXC motif. Residues 439 to 459 (AVPLLVPLLAGLSIAGSAAIG) form a fusion peptide region. Residues 439–626 (AVPLLVPLLA…KTQYDTLVNN (188 aa)) are transmembrane protein. A CKS-17 motif is present at residues 503–519 (LQNCRCLDLLFLSQGGL). A disulfide bridge links C520 with C527. The CX6CC motif lies at 520–528 (CAALGESCC). Residues 576-596 (ITGLAGPLLILLLSLIFGPCI) form a helical membrane-spanning segment. Residues 597 to 626 (LNSFLNFIKQRIASVKLTYLKTQYDTLVNN) lie on the Cytoplasmic side of the membrane.

The protein belongs to the gamma type-C retroviral envelope protein family. HERV class-I T env subfamily. The CXXC motif is highly conserved across a broad range of retroviral envelope proteins. It is thought to participate in the formation of a labile disulfide bond possibly with the CX6CC motif present in the transmembrane domain. As to expression, expressed at higher level in thyroid. Expressed at lower level in adrenal, bone marrow, brain, breast, kidney, ovary, placenta, prostate, skin, testis and trachea.

The protein resides in the cell membrane. In terms of biological role, retroviral envelope proteins mediate receptor recognition and membrane fusion during early infection. Endogenous envelope proteins may have kept, lost or modified their original function during evolution. This endogenous envelope protein has lost its original fusogenic properties. In Homo sapiens (Human), this protein is Endogenous retrovirus group S71 member 1 Env polyprotein (ERVS71-1).